A 506-amino-acid polypeptide reads, in one-letter code: Zinc finger protein 157 (506 aa).

A KRAB domain is found at 27–98 (VSFEDVAVDF…EEESSGHGYS (72 aa)). C2H2-type zinc fingers lie at residues 162–184 (FECH…LRIH), 190–212 (YECG…QKTH), 218–240 (FECN…TRTH), 246–268 (YECT…QRTH), 274–296 (YECS…HRTH), 302–324 (YECG…QRIH), 330–352 (YECG…QRTH), 358–380 (YQCN…QRIH), 386–408 (YECN…QRMH), 414–436 (YECS…RRTH), 442–464 (YECS…QRIH), and 470–492 (FECQ…QRTH).

This sequence belongs to the krueppel C2H2-type zinc-finger protein family.

It is found in the nucleus. Its function is as follows. May be involved in transcriptional regulation. In Homo sapiens (Human), this protein is Zinc finger protein 157 (ZNF157).